Consider the following 513-residue polypeptide: ATP synthase subunit alpha, mitochondrial (513 aa).

170 to 177 contributes to the ATP binding site; the sequence is GDRQTGKT.

The protein belongs to the ATPase alpha/beta chains family. F-type ATPases have 2 components, CF(1) - the catalytic core - and CF(0) - the membrane proton channel. CF(1) has five subunits: alpha(3), beta(3), gamma(1), delta(1), epsilon(1). CF(0) has three main subunits: a, b and c.

It localises to the mitochondrion. Its subcellular location is the mitochondrion inner membrane. Functionally, mitochondrial membrane ATP synthase (F(1)F(0) ATP synthase or Complex V) produces ATP from ADP in the presence of a proton gradient across the membrane which is generated by electron transport complexes of the respiratory chain. F-type ATPases consist of two structural domains, F(1) - containing the extramembraneous catalytic core, and F(0) - containing the membrane proton channel, linked together by a central stalk and a peripheral stalk. During catalysis, ATP synthesis in the catalytic domain of F(1) is coupled via a rotary mechanism of the central stalk subunits to proton translocation. Subunits alpha and beta form the catalytic core in F(1). Rotation of the central stalk against the surrounding alpha(3)beta(3) subunits leads to hydrolysis of ATP in three separate catalytic sites on the beta subunits. Subunit alpha does not bear the catalytic high-affinity ATP-binding sites. The polypeptide is ATP synthase subunit alpha, mitochondrial (ATPA) (Marchantia polymorpha (Common liverwort)).